A 378-amino-acid polypeptide reads, in one-letter code: Poly(3-hydroxyalkanoate) polymerase subunit PhaC (378 aa).

An AB hydrolase-1 domain is found at 84–356 (PVLIVYALVN…QSFPVGHIGM (273 aa)).

It belongs to the PHA/PHB synthase family. Type III PhaC subfamily. In terms of assembly, forms a heterodimer with PhaE, which may multimerize in the presence of 3-hydroxybutyryl-CoA. Both subunits are required for PHB synthesis in E.coli and in PHA-negative A.eutrophus.

Its subcellular location is the cytoplasm. It carries out the reaction (3R)-3-hydroxybutanoyl-CoA + [(3R)-hydroxybutanoate](n) = [(3R)-hydroxybutanoate](n+1) + CoA. It functions in the pathway biopolymer metabolism; poly-(R)-3-hydroxybutanoate biosynthesis. When expressed in E.coli with Synechocystis PhaE and C.necator PhaA and PhaB, confers the ability to synthesize up to 13% (w/w) poly(3-hydroxybutyrate) (PHB) depending on the carbon source; all 4 genes are necessary for PHB production. Cell-free in vitro coexpression with PhaE gives a heterodimer able to polymerize 3-hydroxybutyrate-CoA. The chain is Poly(3-hydroxyalkanoate) polymerase subunit PhaC from Synechocystis sp. (strain ATCC 27184 / PCC 6803 / Kazusa).